We begin with the raw amino-acid sequence, 458 residues long: Cysteine--tRNA ligase (458 aa).

Position 29 (Cys29) interacts with Zn(2+). The short motif at Met31 to His41 is the 'HIGH' region element. Positions 213, 238, and 242 each coordinate Zn(2+). The 'KMSKS' region signature appears at Lys270–Ser274. ATP is bound at residue Lys273.

It belongs to the class-I aminoacyl-tRNA synthetase family. As to quaternary structure, monomer. The cofactor is Zn(2+).

It localises to the cytoplasm. The enzyme catalyses tRNA(Cys) + L-cysteine + ATP = L-cysteinyl-tRNA(Cys) + AMP + diphosphate. The protein is Cysteine--tRNA ligase of Acidovorax ebreus (strain TPSY) (Diaphorobacter sp. (strain TPSY)).